Reading from the N-terminus, the 104-residue chain is Large ribosomal subunit protein uL24 (104 aa).

The protein belongs to the universal ribosomal protein uL24 family. In terms of assembly, part of the 50S ribosomal subunit.

Functionally, one of two assembly initiator proteins, it binds directly to the 5'-end of the 23S rRNA, where it nucleates assembly of the 50S subunit. In terms of biological role, one of the proteins that surrounds the polypeptide exit tunnel on the outside of the subunit. The protein is Large ribosomal subunit protein uL24 of Corynebacterium aurimucosum (strain ATCC 700975 / DSM 44827 / CIP 107346 / CN-1) (Corynebacterium nigricans).